Here is a 275-residue protein sequence, read N- to C-terminus: NH(3)-dependent NAD(+) synthetase (275 aa).

50–57 (GISGGVDS) lines the ATP pocket. Residue Asp-56 coordinates Mg(2+). Arg-147 contacts deamido-NAD(+). Thr-167 contributes to the ATP binding site. Position 172 (Glu-172) interacts with Mg(2+). Deamido-NAD(+) contacts are provided by Lys-180 and Asp-187. ATP-binding residues include Lys-196 and Thr-218. Position 267-268 (267-268 (HK)) interacts with deamido-NAD(+).

It belongs to the NAD synthetase family. Homodimer.

The enzyme catalyses deamido-NAD(+) + NH4(+) + ATP = AMP + diphosphate + NAD(+) + H(+). It functions in the pathway cofactor biosynthesis; NAD(+) biosynthesis; NAD(+) from deamido-NAD(+) (ammonia route): step 1/1. Catalyzes the ATP-dependent amidation of deamido-NAD to form NAD. Uses ammonia as a nitrogen source. This is NH(3)-dependent NAD(+) synthetase from Pseudomonas putida (strain ATCC 47054 / DSM 6125 / CFBP 8728 / NCIMB 11950 / KT2440).